The sequence spans 478 residues: NADH oxidase (478 aa).

FAD is bound by residues 8 to 12 (GINHA), aspartate 33, cysteine 43, valine 80, 111 to 114 (ASGA), lysine 149, and tyrosine 177. Histidine 11 serves as the catalytic Proton acceptor. The Redox-active role is filled by cysteine 43. Cysteine 43 is subject to Cysteine sulfinic acid (-SO2H). Residues 170–185 (VAIV…LAEA), aspartate 197, and glycine 264 contribute to the NAD(+) site. FAD is bound by residues 295-305 (LNHKDVYVIGG), leucine 322, alanine 323, and threonine 324. Alanine 353 is an NAD(+) binding site. Phenylalanine 450 is a binding site for FAD.

The protein belongs to the class-III pyridine nucleotide-disulfide oxidoreductase family. FAD is required as a cofactor.

The catalysed reaction is 2 NADH + O2 + 2 H(+) = 2 NAD(+) + 2 H2O. Functionally, catalyzes the four-electron reduction of molecular oxygen to water. The protein is NADH oxidase (nox) of Mycoplasma genitalium (strain ATCC 33530 / DSM 19775 / NCTC 10195 / G37) (Mycoplasmoides genitalium).